The chain runs to 255 residues: Taurine import ATP-binding protein TauB (255 aa).

The ABC transporter domain maps to 2-229 (LQISHLYADY…RFVAGESSRS (228 aa)). Position 34–41 (34–41 (GPSGCGKT)) interacts with ATP.

The protein belongs to the ABC transporter superfamily. Taurine importer (TC 3.A.1.17.1) family. The complex is composed of two ATP-binding proteins (TauB), two transmembrane proteins (TauC) and a solute-binding protein (TauA).

The protein resides in the cell inner membrane. The enzyme catalyses taurine(out) + ATP + H2O = taurine(in) + ADP + phosphate + H(+). Part of the ABC transporter complex TauABC involved in taurine import. Responsible for energy coupling to the transport system. This chain is Taurine import ATP-binding protein TauB, found in Escherichia coli (strain K12).